A 153-amino-acid polypeptide reads, in one-letter code: MTHPLVPPITDLAIPVAEQLGLEVVGIVFHTNQRPPVLRIDIRNPQQDTGLDDCERMSRALEAALDATEIIPDAYVLEVSSPGISRQLVTDREFISFKGFPVIVSTSPPHEEQQEWIGQLIRRDETKVYINQKGRVIEIPRPLITRVLLYDGE.

It belongs to the RimP family.

The protein localises to the cytoplasm. Functionally, required for maturation of 30S ribosomal subunits. This Nostoc sp. (strain PCC 7120 / SAG 25.82 / UTEX 2576) protein is Ribosome maturation factor RimP.